The chain runs to 205 residues: MVFSSYKLPDLPYDYDALEPVISAEIMHLHHQKHHQGYINNLNEALKSLDVASATQDLTGLIAINPALRFNGGGHINHSLFWEMLAPQNKGGGTPPRHELLKLIEKFWGSFDNFLKNFISSSAAVQGSGWGWLAFCPKKQELMIQTTANQDPLEATTGMIPLLGVDVWEHAYYLQYKNARLDYLKNFPSIINWDYIESRFVEMSK.

Residues His-30, His-78, Asp-166, and His-170 each contribute to the Mn(2+) site.

Belongs to the iron/manganese superoxide dismutase family. Homodimer. The cofactor is Mn(2+).

It carries out the reaction 2 superoxide + 2 H(+) = H2O2 + O2. In terms of biological role, destroys superoxide anion radicals which are normally produced within the cells and which are toxic to biological systems. This chain is Superoxide dismutase [Mn] (sodA), found in Chlamydia muridarum (strain MoPn / Nigg).